We begin with the raw amino-acid sequence, 412 residues long: Carboxypeptidase B1 (412 aa).

An N-terminal signal peptide occupies residues 1 to 18; that stretch reads MIPRIVVVLLSVLAVVTA. Residues 19–75 constitute a propeptide, activation peptide; it reads RRSYEGYKVYGIVPESPDEAEILYQIRQSNPDLDFWHLTKQPGDEARVLVAPKDQRS. Positions 118–408 constitute a Peptidase M14 domain; it reads SYLRHNEINE…VGIKAMALKV (291 aa). Zn(2+) is bound by residues His175 and Glu178. 175–178 is an a peptide binding site; the sequence is HARE. Asn205 carries N-linked (GlcNAc...) asparagine glycosylation. A peptide is bound by residues Arg230 and 246–247; that span reads NR. Residues Cys240 and Cys263 are joined by a disulfide bond. Zn(2+) is bound at residue His299. Residues 300–301 and Tyr351 each bind a peptide; that span reads SY. The active-site Proton donor/acceptor is the Glu374. Asn395 carries N-linked (GlcNAc...) asparagine glycosylation.

This sequence belongs to the peptidase M14 family. In terms of assembly, monomer. Interacts with Dengue virus type 2 (DENV2, MY89-88549 strain) envelope protein E. Interacts with Dengue virus envelope protein E type 3, type 2, type 4 and type 1 with decreasing strength. Requires Zn(2+) as cofactor. Expressed in midgut (at protein level).

It localises to the endoplasmic reticulum. It catalyses the reaction Preferential release of a C-terminal lysine or arginine amino acid.. Its activity is regulated as follows. Inhibited by S.tuberosum metallocarboxypeptidase inhibitor. In terms of biological role, carboxypeptidase that preferentially hydrolyzes arginine and lysine residues at the C-terminus. During infection by dengue virus, may play a role in preventing viral packaging, maturation, and release from the midgut. This Aedes aegypti (Yellowfever mosquito) protein is Carboxypeptidase B1.